Consider the following 352-residue polypeptide: Aliphatic aldoxime dehydratase (352 aa).

Serine 219 contacts an aliphatic aldoxime. Residue histidine 299 participates in heme b binding. Histidine 320 serves as a coordination point for an aliphatic aldoxime. Histidine 320 is an active-site residue.

The protein belongs to the heme-containing dehydratase family. As to quaternary structure, homodimer. Requires heme b as cofactor. Ca(2+) serves as cofactor.

It catalyses the reaction an aliphatic aldoxime = a nitrile + H2O. Active when the heme iron is in the ferrous state. Is very sensitive to AgNO(3), is also inhibited by hydroxylamine and phenylhydrazine, and hardly inhibited by thiol reagents. Not sensitive to chelating agents and serine-modifying reagents. Its function is as follows. Catalyzes the dehydration of aldoximes to their corresponding nitrile. Aliphatic aldoximes are more effective substrates than aromatic aldoximes. Shows high activity with butyraldoxime and acetaldoxime, but only weak activity with the aromatic aldoxime pyridine-2-aldoxime. Cannot use benzaldoxime, isonitrosoacetophenone and pyridine-4-aldoxime. Is involved in the metabolism of aldoxime in vivo. The protein is Aliphatic aldoxime dehydratase of Pseudomonas chlororaphis (Pseudomonas aureofaciens).